Reading from the N-terminus, the 163-residue chain is Small heat shock protein C1 (163 aa).

In terms of domain architecture, sHSP spans M55–N163.

This sequence belongs to the small heat shock protein (HSP20) family.

This is Small heat shock protein C1 (hspC1) from Rickettsia typhi (strain ATCC VR-144 / Wilmington).